A 624-amino-acid chain; its full sequence is Phosphomethylpyrimidine synthase (624 aa).

The interval 48 to 70 (SDTHTSQGREKNPPLTVYDTSGP) is disordered. Substrate is bound by residues N229, M258, Y287, H323, 343 to 345 (SRG), 384 to 387 (DGLR), and E423. Zn(2+) is bound at residue H427. Y450 serves as a coordination point for substrate. H491 is a Zn(2+) binding site. [4Fe-4S] cluster is bound by residues C571, C574, and C579.

This sequence belongs to the ThiC family. As to quaternary structure, homodimer. Requires [4Fe-4S] cluster as cofactor.

It catalyses the reaction 5-amino-1-(5-phospho-beta-D-ribosyl)imidazole + S-adenosyl-L-methionine = 4-amino-2-methyl-5-(phosphooxymethyl)pyrimidine + CO + 5'-deoxyadenosine + formate + L-methionine + 3 H(+). Its pathway is cofactor biosynthesis; thiamine diphosphate biosynthesis. Its function is as follows. Catalyzes the synthesis of the hydroxymethylpyrimidine phosphate (HMP-P) moiety of thiamine from aminoimidazole ribotide (AIR) in a radical S-adenosyl-L-methionine (SAM)-dependent reaction. In Nitrosococcus oceani (strain ATCC 19707 / BCRC 17464 / JCM 30415 / NCIMB 11848 / C-107), this protein is Phosphomethylpyrimidine synthase.